A 386-amino-acid polypeptide reads, in one-letter code: Succinate--CoA ligase [ADP-forming] subunit beta (386 aa).

An ATP-grasp domain is found at 9–244 (KAILRSYGVS…LDEEDPKEIE (236 aa)). ATP is bound by residues lysine 46, 53 to 55 (GRG), glutamate 99, cysteine 102, and glutamate 107. Positions 199 and 213 each coordinate Mg(2+). Substrate is bound by residues asparagine 264 and 321–323 (GIM).

It belongs to the succinate/malate CoA ligase beta subunit family. In terms of assembly, heterotetramer of two alpha and two beta subunits. Mg(2+) is required as a cofactor.

It catalyses the reaction succinate + ATP + CoA = succinyl-CoA + ADP + phosphate. It carries out the reaction GTP + succinate + CoA = succinyl-CoA + GDP + phosphate. It functions in the pathway carbohydrate metabolism; tricarboxylic acid cycle; succinate from succinyl-CoA (ligase route): step 1/1. In terms of biological role, succinyl-CoA synthetase functions in the citric acid cycle (TCA), coupling the hydrolysis of succinyl-CoA to the synthesis of either ATP or GTP and thus represents the only step of substrate-level phosphorylation in the TCA. The beta subunit provides nucleotide specificity of the enzyme and binds the substrate succinate, while the binding sites for coenzyme A and phosphate are found in the alpha subunit. In Bacillus cytotoxicus (strain DSM 22905 / CIP 110041 / 391-98 / NVH 391-98), this protein is Succinate--CoA ligase [ADP-forming] subunit beta.